The chain runs to 188 residues: MEDTAIIRSPQPSINAPGFHLPPTDSQQSSAIELPFQFQATTFGATETAAQISLASANAITKLASLYRHVRLTQCAATITPTAAAIANPLTVNIVWVSDNSTAKPTEILNVFGGSSYTFGGALNATKPLTIPLPMNSVNCMLKDSVLYTDCPKLLAYSAAPSSPSKTPTATIQIHGKLRLSSPLLQAN.

Belongs to the tymoviruses capsid protein family.

It is found in the virion. Its function is as follows. Self-assembles to form a T=3 icosahedral capsid composed of 180 copies of the capsid protein. The capsid encapsulates the single-stranded RNA genome. This Solanum lycopersicum (Tomato) protein is Capsid protein.